Consider the following 258-residue polypeptide: Ribosomal RNA large subunit methyltransferase E (258 aa).

Positions 58, 60, 78, 96, and 120 each coordinate S-adenosyl-L-methionine. Lys-160 acts as the Proton acceptor in catalysis.

This sequence belongs to the class I-like SAM-binding methyltransferase superfamily. RNA methyltransferase RlmE family.

Its subcellular location is the cytoplasm. The catalysed reaction is uridine(2552) in 23S rRNA + S-adenosyl-L-methionine = 2'-O-methyluridine(2552) in 23S rRNA + S-adenosyl-L-homocysteine + H(+). Specifically methylates the uridine in position 2552 of 23S rRNA at the 2'-O position of the ribose in the fully assembled 50S ribosomal subunit. The protein is Ribosomal RNA large subunit methyltransferase E of Methanococcus maripaludis (strain DSM 14266 / JCM 13030 / NBRC 101832 / S2 / LL).